The following is a 429-amino-acid chain: Arrestin-related trafficking adapter 10 (429 aa).

Belongs to the ART10 family.

It is found in the cytoplasm. May regulate endocytosis by recruiting RSP5 ubiquitin ligase activity to specific plasma membrane proteins in response to extracellular stimuli. The polypeptide is Arrestin-related trafficking adapter 10 (ART10) (Lachancea thermotolerans (strain ATCC 56472 / CBS 6340 / NRRL Y-8284) (Yeast)).